A 202-amino-acid chain; its full sequence is Phospholipase A2 inhibitor gamma subunit A (202 aa).

Residues 1-19 form the signal peptide; sequence MKSLQIICLLFIFVARGSC. 8 cysteine pairs are disulfide-bonded: Cys22-Cys47, Cys25-Cys32, Cys40-Cys68, Cys74-Cys95, Cys96-Cys101, Cys119-Cys144, Cys137-Cys166, and Cys170-Cys192.

This sequence belongs to the CNF-like-inhibitor family. Heteromer composed of subunit A and subunit B. As to expression, expressed by the liver.

It is found in the secreted. Inhibits the enzymatic activity of the phospholipase A2 (PLA2). This Elaphe climacophora (Japanese rat snake) protein is Phospholipase A2 inhibitor gamma subunit A.